The sequence spans 364 residues: GDP-fucose transporter 1 (364 aa).

The next 8 membrane-spanning stretches (helical) occupy residues 34–56, 76–98, 111–130, 140–162, 167–185, 195–214, 227–249, and 264–286; these read FLLR…ISMV, VTFY…AACC, LRVA…MITF, VAFY…YLLL, SFYA…WLGV, SWLG…LNAI, IWRL…LLLL, and AHFW…VTGL.

The protein belongs to the TPT transporter family. SLC35C subfamily.

Its subcellular location is the golgi apparatus membrane. It carries out the reaction GMP(out) + GDP-beta-L-fucose(in) = GMP(in) + GDP-beta-L-fucose(out). In terms of biological role, antiporter specific for GDP-l-fucose and depending on the concomitant reverse transport of GMP. Involved in GDP-fucose import from the cytoplasm into the Golgi lumen. The polypeptide is GDP-fucose transporter 1 (Homo sapiens (Human)).